Here is a 284-residue protein sequence, read N- to C-terminus: Pantothenate synthetase (284 aa).

M30–H37 is an ATP binding site. The active-site Proton donor is H37. Q61 contacts (R)-pantoate. Q61 contacts beta-alanine. An ATP-binding site is contributed by G149–D152. Q155 lines the (R)-pantoate pocket. Residues I178 and L186 to R189 each bind ATP.

The protein belongs to the pantothenate synthetase family. Homodimer.

It is found in the cytoplasm. It carries out the reaction (R)-pantoate + beta-alanine + ATP = (R)-pantothenate + AMP + diphosphate + H(+). Its pathway is cofactor biosynthesis; (R)-pantothenate biosynthesis; (R)-pantothenate from (R)-pantoate and beta-alanine: step 1/1. Functionally, catalyzes the condensation of pantoate with beta-alanine in an ATP-dependent reaction via a pantoyl-adenylate intermediate. In Salmonella heidelberg (strain SL476), this protein is Pantothenate synthetase.